A 178-amino-acid chain; its full sequence is Inorganic pyrophosphatase (178 aa).

Positions 30, 44, and 56 each coordinate substrate. Mg(2+) is bound by residues Asp-66, Asp-71, and Asp-103. Residue Tyr-140 coordinates substrate.

Belongs to the PPase family. Homohexamer. Mg(2+) serves as cofactor.

The protein resides in the cytoplasm. The catalysed reaction is diphosphate + H2O = 2 phosphate + H(+). Functionally, catalyzes the hydrolysis of inorganic pyrophosphate (PPi) forming two phosphate ions. This chain is Inorganic pyrophosphatase, found in Pyrococcus abyssi (strain GE5 / Orsay).